The sequence spans 366 residues: Holliday junction branch migration complex subunit RuvB (366 aa).

The interval 1 to 49 (MAIISSKKQPPEPNGQPNKRPESAPSVPKEKVLQPEAAIDEQGKQEESI) is disordered. Residues 13 to 210 (PNGQPNKRPE…FGLIQKLRFY (198 aa)) form a large ATPase domain (RuvB-L) region. ATP contacts are provided by residues Ile-49, Arg-50, Gly-91, Lys-94, Thr-95, Thr-96, 157–159 (EDY), Arg-200, Tyr-210, and Arg-247. Thr-95 is a Mg(2+) binding site. The tract at residues 211 to 281 (EVDELSQIVL…IAAEALQLFQ (71 aa)) is small ATPAse domain (RuvB-S). The interval 284–366 (PCGLDWTDRR…TPPNEQLSLL (83 aa)) is head domain (RuvB-H). 2 residues coordinate DNA: Arg-339 and Arg-344.

It belongs to the RuvB family. In terms of assembly, homohexamer. Forms an RuvA(8)-RuvB(12)-Holliday junction (HJ) complex. HJ DNA is sandwiched between 2 RuvA tetramers; dsDNA enters through RuvA and exits via RuvB. An RuvB hexamer assembles on each DNA strand where it exits the tetramer. Each RuvB hexamer is contacted by two RuvA subunits (via domain III) on 2 adjacent RuvB subunits; this complex drives branch migration. In the full resolvosome a probable DNA-RuvA(4)-RuvB(12)-RuvC(2) complex forms which resolves the HJ.

It localises to the cytoplasm. The catalysed reaction is ATP + H2O = ADP + phosphate + H(+). The RuvA-RuvB-RuvC complex processes Holliday junction (HJ) DNA during genetic recombination and DNA repair, while the RuvA-RuvB complex plays an important role in the rescue of blocked DNA replication forks via replication fork reversal (RFR). RuvA specifically binds to HJ cruciform DNA, conferring on it an open structure. The RuvB hexamer acts as an ATP-dependent pump, pulling dsDNA into and through the RuvAB complex. RuvB forms 2 homohexamers on either side of HJ DNA bound by 1 or 2 RuvA tetramers; 4 subunits per hexamer contact DNA at a time. Coordinated motions by a converter formed by DNA-disengaged RuvB subunits stimulates ATP hydrolysis and nucleotide exchange. Immobilization of the converter enables RuvB to convert the ATP-contained energy into a lever motion, pulling 2 nucleotides of DNA out of the RuvA tetramer per ATP hydrolyzed, thus driving DNA branch migration. The RuvB motors rotate together with the DNA substrate, which together with the progressing nucleotide cycle form the mechanistic basis for DNA recombination by continuous HJ branch migration. Branch migration allows RuvC to scan DNA until it finds its consensus sequence, where it cleaves and resolves cruciform DNA. The polypeptide is Holliday junction branch migration complex subunit RuvB (Nostoc sp. (strain PCC 7120 / SAG 25.82 / UTEX 2576)).